The primary structure comprises 460 residues: tRNA-splicing endonuclease subunit Sen2 (460 aa).

The segment at 143–215 (EKEETPQHEP…SPSSHNGHVA (73 aa)) is disordered. The segment covering 159-170 (SSLEGRVEKDEL) has biased composition (basic and acidic residues). Residues Tyr364 and His372 contribute to the active site. 3 positions are modified to phosphoserine: Ser403, Ser406, and Ser410. Lys411 is a catalytic residue.

It belongs to the tRNA-intron endonuclease family. In terms of assembly, tRNA splicing endonuclease is a heterotetramer composed of TSEN2, TSEN15, TSEN34/LENG5 and TSEN54. tRNA splicing endonuclease complex also contains proteins of the pre-mRNA 3'-end processing machinery such as CLP1, CPSF1, CPSF4 and CSTF2.

The protein localises to the nucleus. Its subcellular location is the nucleolus. The catalysed reaction is pretRNA = a 3'-half-tRNA molecule with a 5'-OH end + a 5'-half-tRNA molecule with a 2',3'-cyclic phosphate end + an intron with a 2',3'-cyclic phosphate and a 5'-hydroxyl terminus.. In terms of biological role, constitutes one of the two catalytic subunit of the tRNA-splicing endonuclease complex, a complex responsible for identification and cleavage of the splice sites in pre-tRNA. It cleaves pre-tRNA at the 5'- and 3'-splice sites to release the intron. The products are an intron and two tRNA half-molecules bearing 2',3'-cyclic phosphate and 5'-OH termini. There are no conserved sequences at the splice sites, but the intron is invariably located at the same site in the gene, placing the splice sites an invariant distance from the constant structural features of the tRNA body. Probably carries the active site for 5'-splice site cleavage. The tRNA splicing endonuclease is also involved in mRNA processing via its association with pre-mRNA 3'-end processing factors, establishing a link between pre-tRNA splicing and pre-mRNA 3'-end formation, suggesting that the endonuclease subunits function in multiple RNA-processing events. This is tRNA-splicing endonuclease subunit Sen2 (Tsen2) from Mus musculus (Mouse).